We begin with the raw amino-acid sequence, 374 residues long: WD repeat-containing protein JIP5 (374 aa).

7 WD repeats span residues 21–61, 68–107, 120–158, 161–200, 205–244, 249–287, and 290–330; these read AYTS…GETS, PSKR…IQLS, AHEC…SIRT, QHFD…STPL, DQED…ADSV, GHPA…FLGV, and THEE…EDSD. Acidic residues predominate over residues 325–344; sequence LFEDSDEDDEMEEDEPDSDE. The interval 325–374 is disordered; it reads LFEDSDEDDEMEEDEPDSDEEKSKKKKKDNGMKDMSRGQAENDGSFFADL.

The protein belongs to the WD repeat WDR55 family.

It is found in the nucleus. Its subcellular location is the nucleolus. The polypeptide is WD repeat-containing protein JIP5 (JIP5) (Cryptococcus neoformans var. neoformans serotype D (strain B-3501A) (Filobasidiella neoformans)).